Reading from the N-terminus, the 4981-residue chain is Protocadherin Fat 4 (4981 aa).

The N-terminal stretch at methionine 1–alanine 42 is a signal peptide. At alanine 43–alanine 4505 the chain is on the extracellular side. 34 consecutive Cadherin domains span residues glutamate 44 to phenylalanine 135, proline 136 to phenylalanine 250, glycine 251 to valine 353, proline 359 to phenylalanine 475, glutamate 476 to phenylalanine 582, glutamine 584 to phenylalanine 689, tyrosine 690 to phenylalanine 793, serine 794 to phenylalanine 893, leucine 894 to phenylalanine 996, aspartate 997 to phenylalanine 1100, asparagine 1101 to phenylalanine 1210, leucine 1211 to phenylalanine 1315, proline 1316 to phenylalanine 1420, proline 1421 to phenylalanine 1529, phenylalanine 1529 to phenylalanine 1629, threonine 1630 to phenylalanine 1740, proline 1741 to phenylalanine 1841, serine 1842 to phenylalanine 1944, serine 1945 to phenylalanine 2051, phenylalanine 2051 to phenylalanine 2154, alanine 2155 to phenylalanine 2259, glutamate 2260 to phenylalanine 2364, alanine 2365 to phenylalanine 2468, glutamine 2469 to valine 2569, arginine 2570 to phenylalanine 2671, glutamate 2672 to phenylalanine 2775, phenylalanine 2775 to phenylalanine 2874, serine 2875 to phenylalanine 2985, leucine 2986 to phenylalanine 3091, serine 3092 to phenylalanine 3196, valine 3197 to phenylalanine 3300, valine 3301 to phenylalanine 3406, serine 3407 to leucine 3512, and valine 3511 to phenylalanine 3622. N-linked (GlcNAc...) asparagine glycans are attached at residues asparagine 84 and asparagine 237. Residues asparagine 393, asparagine 416, asparagine 435, asparagine 483, asparagine 551, asparagine 615, asparagine 676, asparagine 721, asparagine 825, asparagine 880, asparagine 948, asparagine 1085, asparagine 1101, asparagine 1104, asparagine 1225, asparagine 1296, asparagine 1389, and asparagine 1514 are each glycosylated (N-linked (GlcNAc...) asparagine). 4 N-linked (GlcNAc...) asparagine glycosylation sites follow: asparagine 1828, asparagine 1899, asparagine 1967, and asparagine 2119. Asparagine 2387 and asparagine 2432 each carry an N-linked (GlcNAc...) asparagine glycan. Asparagine 2923, asparagine 2939, asparagine 3038, asparagine 3142, asparagine 3219, asparagine 3394, and asparagine 3479 each carry an N-linked (GlcNAc...) asparagine glycan. N-linked (GlcNAc...) asparagine glycans are attached at residues asparagine 3708 and asparagine 3760. An EGF-like 1 domain is found at aspartate 3804–glutamate 3862. 12 disulfides stabilise this stretch: cysteine 3808/cysteine 3819, cysteine 3813/cysteine 3850, cysteine 3852/cysteine 3861, cysteine 3868/cysteine 3879, cysteine 3873/cysteine 3888, cysteine 3890/cysteine 3899, cysteine 3906/cysteine 3917, cysteine 3911/cysteine 3926, cysteine 3928/cysteine 3937, cysteine 3944/cysteine 3955, cysteine 3949/cysteine 3964, and cysteine 3966/cysteine 3975. An EGF-like 2; calcium-binding domain is found at aspartate 3864–glutamate 3900. Residues aspartate 3902–glutamate 3938 enclose the EGF-like 3; calcium-binding domain. An EGF-like 4 domain is found at serine 3940 to glutamate 3976. One can recognise a Laminin G-like 1 domain in the interval leucine 3977–cysteine 4161. An N-linked (GlcNAc...) asparagine glycan is attached at asparagine 4019. Intrachain disulfides connect cysteine 4135-cysteine 4161, cysteine 4168-cysteine 4179, cysteine 4173-cysteine 4188, and cysteine 4190-cysteine 4199. One can recognise an EGF-like 5 domain in the interval leucine 4164–glutamate 4200. Residues tyrosine 4219–cysteine 4399 form the Laminin G-like 2 domain. 2 N-linked (GlcNAc...) asparagine glycosylation sites follow: asparagine 4269 and asparagine 4314. 4 disulfides stabilise this stretch: cysteine 4366/cysteine 4399, cysteine 4431/cysteine 4442, cysteine 4436/cysteine 4452, and cysteine 4454/cysteine 4463. The EGF-like 6 domain maps to proline 4427–glutamate 4464. Residues valine 4506–leucine 4526 form a helical membrane-spanning segment. Residues cysteine 4527 to valine 4981 lie on the Cytoplasmic side of the membrane. 5 disordered regions span residues proline 4535–isoleucine 4585, proline 4677–alanine 4713, arginine 4753–lysine 4773, arginine 4796–alanine 4911, and alanine 4957–valine 4981. Residues proline 4677 to serine 4701 are compositionally biased toward polar residues. Positions phenylalanine 4708 to leucine 4797 are necessary and sufficient for interaction with MPDZ. Basic and acidic residues predominate over residues aspartate 4811 to arginine 4823. Phosphoserine is present on serine 4878. Residues alanine 4971 to valine 4981 show a composition bias toward basic and acidic residues.

In terms of assembly, heterophilic interaction with DCHS1; this interaction affects their respective protein levels. Interacts (via cytoplasmic domain) with MPDZ. Forms a complex with PALS1 and MPDZ. As to expression, widely expressed.

The protein resides in the membrane. Its function is as follows. Cadherins are cell-cell interaction molecules. FAT4 plays a role in the maintenance of planar cell polarity as well as in inhibition of YAP1-mediated neuroprogenitor cell proliferation and differentiation. This Mus musculus (Mouse) protein is Protocadherin Fat 4 (Fat4).